Consider the following 450-residue polypeptide: ATP-dependent protease ATPase subunit HslU (450 aa).

ATP is bound by residues Val-29, 71-76 (GVGKTE), Asp-261, Glu-328, and Arg-400.

Belongs to the ClpX chaperone family. HslU subfamily. A double ring-shaped homohexamer of HslV is capped on each side by a ring-shaped HslU homohexamer. The assembly of the HslU/HslV complex is dependent on binding of ATP.

It is found in the cytoplasm. Its function is as follows. ATPase subunit of a proteasome-like degradation complex; this subunit has chaperone activity. The binding of ATP and its subsequent hydrolysis by HslU are essential for unfolding of protein substrates subsequently hydrolyzed by HslV. HslU recognizes the N-terminal part of its protein substrates and unfolds these before they are guided to HslV for hydrolysis. This chain is ATP-dependent protease ATPase subunit HslU, found in Rickettsia rickettsii (strain Iowa).